Reading from the N-terminus, the 383-residue chain is Chitinase-3-like protein 1 (383 aa).

The first 21 residues, 1 to 21 (MGLRAAHTGFVVLVLLQSCAA), serve as a signal peptide directing secretion. Residues 22–383 (YKLICYYTSW…SAIKDVLARV (362 aa)) form the GH18 domain. Cys26 and Cys51 are disulfide-bonded. N-linked (GlcNAc...) asparagine glycosylation occurs at Asn60. Chitin is bound by residues 70-71 (EW), 97-100 (GGWN), Tyr141, 204-207 (LTYD), and Arg263. An intrachain disulfide couples Cys300 to Cys364. The tract at residues 324-338 (QWVAYDDQESVKNKA) is important for AKT1 activation and IL8 production. Trp352 is a binding site for chitin. Asn367 is a glycosylation site (N-linked (GlcNAc...) asparagine).

It belongs to the glycosyl hydrolase 18 family. Monomer. Glycosylated. Mammary secretions collected during the non-lactating period.

It localises to the secreted. It is found in the extracellular space. The protein localises to the cytoplasm. The protein resides in the perinuclear region. Its subcellular location is the endoplasmic reticulum. Carbohydrate-binding lectin with a preference for chitin. Has no chitinase activity. May play a role in tissue remodeling and in the capacity of cells to respond to and cope with changes in their environment. Plays a role in T-helper cell type 2 (Th2) inflammatory response and IL-13-induced inflammation, regulating allergen sensitization, inflammatory cell apoptosis, dendritic cell accumulation and M2 macrophage differentiation. Facilitates invasion of pathogenic enteric bacteria into colonic mucosa and lymphoid organs. Mediates activation of AKT1 signaling pathway and subsequent IL8 production in colonic epithelial cells. Regulates antibacterial responses in lung by contributing to macrophage bacterial killing, controlling bacterial dissemination and augmenting host tolerance. Also regulates hyperoxia-induced injury, inflammation and epithelial apoptosis in lung. The polypeptide is Chitinase-3-like protein 1 (CHI3L1) (Bos taurus (Bovine)).